A 226-amino-acid polypeptide reads, in one-letter code: 7-cyano-7-deazaguanine synthase (226 aa).

Residue 10-20 coordinates ATP; it reads FSGGQDSTTLA. Residues C190, C205, C208, and C211 each coordinate Zn(2+).

Belongs to the QueC family. Zn(2+) serves as cofactor.

The enzyme catalyses 7-carboxy-7-deazaguanine + NH4(+) + ATP = 7-cyano-7-deazaguanine + ADP + phosphate + H2O + H(+). It functions in the pathway purine metabolism; 7-cyano-7-deazaguanine biosynthesis. Its function is as follows. Catalyzes the ATP-dependent conversion of 7-carboxy-7-deazaguanine (CDG) to 7-cyano-7-deazaguanine (preQ(0)). The protein is 7-cyano-7-deazaguanine synthase of Helicobacter pylori (strain Shi470).